Reading from the N-terminus, the 84-residue chain is uncharacterized protein (84 aa).

Residues 7-62 form the HTH cro/C1-type domain; that stretch reads IDVMLAKRKMSVTELSERVGITMANLSILKNGKAKAIRLSTLEAICKALECQPGDI. Residues 18–37 constitute a DNA-binding region (H-T-H motif); the sequence is VTELSERVGITMANLSILKN.

This is an uncharacterized protein from Bacillus subtilis (strain 168).